The primary structure comprises 1101 residues: MSVSGDDFDDYFDDEIDDVIVPGTSDTVESVQTNNRPAKQSDISISQGNEEDEFQSPDRLSGNAVQFEDVERTSKYNVFIPKCKNVQENIFVTQLTQPPSPPEMIRGPRWKKPGPEPLAPEPATTRVGANHQSDQYHDEDKEMEAAIAASLRSFEEENGGDVPSTASGSTPARTAAAPCAAPKGTAADVPFDLDDIPDDAFDSDLSLSPPRSTSQATRGPPVQSQFRTNRPLGLRQSTLFDMAARNPDISSQRGEQIFSPPEKSEPPTHHKLNEEALNTWVYPTNLGKTRDYQFNIAQRGLFHNLLVALPTGLGKTFIAATIMLNWYRWTKSAQIIFVAPTKPLVAQQISACFQVAGIPRSETTMLTGEAAPGIRAEEWKSKRVFFMTPQTLVNDLKSGIADPKRIVLLVVDEAHRATGGYAYVEVVKFLKRYNKSFRVLALTATPGSTVESVQAIIDDLGIAKVEIRTEQSLDIREYVHARDTEVQTFQNSDEMVLCMELFTRTLQPLVDQLRNLNAYWGRDPMALTAFGLTKARQQWMGSDAGRNANLALKGKVNAIFTVLASLAHAIDLLKYHGITPFYRHLLHFQSNTDGQKGGKYQRQIVQDESFKKLMNHLQPWTKNPDFIGHPKLEYLKQVVLNHFMDRGEGTAANGDQSQSATRIMIFVHFRDSAEEVVRVLKRHEPLIRPHVFVGQSSAKGSEGMDQKTQLSIVQKFKKGTYNTIVATSIGEEGLDIGEVDLIVCYDSSASPIRMLQRMGRTGRKRAGNIVLLLMQGKEEESYIKAKDNYEKMQQMIASGTRFTFHDDKSPRILPPGVRPVAEKRQIDIPVENTQADLPEPRRRARPPKRPPKKFHMPDDVETGFAKASSLTGKVTKKAETKRAVRKPTPEPVEVPALEEVLLTPRQQQDLERRYCHIAGTSPEFIRNPRVDAYPRLQSVPRPTKAVKHGSLTSRMIGTLQKMGKVSVDCESRYRKVLALDSSKEIVDSVLSRDPWPPAKNSGRLGEKTHAFKRPSATPRPNNVHVREDENEDNCTPELVSPEKLMSSFLEPHTERPPYSSQRSQDAFELDFPDVETLLNRSAERHVSRKRNRFVLDDDSDE.

Disordered regions lie at residues 22-59 (PGTS…SPDR), 95-138 (LTQP…QYHD), 154-231 (FEEE…TNRP), and 250-270 (SSQR…PTHH). The segment covering 24–48 (TSDTVESVQTNNRPAKQSDISISQG) has biased composition (polar residues). Positions 170 to 190 (TPARTAAAPCAAPKGTAADVP) are enriched in low complexity. Residues 191 to 202 (FDLDDIPDDAFD) are compositionally biased toward acidic residues. Residues 209–228 (PPRSTSQATRGPPVQSQFRT) show a composition bias toward polar residues. The Helicase ATP-binding domain occupies 296-464 (IAQRGLFHNL…AIIDDLGIAK (169 aa)). 309–316 (LPTGLGKT) serves as a coordination point for ATP. Residues 412-415 (DEAH) carry the DEAH box motif. The Helicase C-terminal domain maps to 634–808 (YLKQVVLNHF…GTRFTFHDDK (175 aa)). Disordered regions lie at residues 824–890 (RQID…PTPE) and 991–1067 (SRDP…QDAF). Over residues 842–854 (RRARPPKRPPKKF) the composition is skewed to basic residues.

The protein belongs to the DEAD box helicase family. DEAH subfamily. FANCM sub-subfamily. Interacts with the MHF histone-fold complex to form the FANCM-MHF complex.

It localises to the nucleus. It catalyses the reaction ATP + H2O = ADP + phosphate + H(+). In terms of biological role, ATP-dependent DNA helicase involved in DNA damage repair by homologous recombination and in genome maintenance. Capable of unwinding D-loops. Plays a role in limiting crossover recombinants during mitotic DNA double-strand break (DSB) repair. Component of a FANCM-MHF complex which promotes gene conversion at blocked replication forks, probably by reversal of the stalled fork. The sequence is that of ATP-dependent DNA helicase mph1 from Aspergillus fumigatus (strain CBS 144.89 / FGSC A1163 / CEA10) (Neosartorya fumigata).